A 169-amino-acid chain; its full sequence is Cysteine synthase B (169 aa).

Lysine 45 is modified (N6-(pyridoxal phosphate)lysine). Asparagine 75 contributes to the pyridoxal 5'-phosphate binding site. The segment at 146-169 (ANGDNPEAHYTSTGPEIWRQTGGT) is disordered.

Belongs to the cysteine synthase/cystathionine beta-synthase family. The cofactor is pyridoxal 5'-phosphate.

The enzyme catalyses O-acetyl-L-serine + hydrogen sulfide = L-cysteine + acetate. It functions in the pathway amino-acid biosynthesis; L-cysteine biosynthesis; L-cysteine from L-serine: step 2/2. This is Cysteine synthase B (cysM) from Pseudomonas syringae pv. syringae.